The sequence spans 624 residues: Threonine--tRNA ligase (624 aa).

The interval 1-143 (MRLLFIHADE…SRTVTPEAAE (143 aa)) is editing domain. The catalytic stretch occupies residues 197 to 499 (AHVKLMREKE…EQEGKLPTLP (303 aa)). Zn(2+) is bound by residues cysteine 289, histidine 340, and histidine 467. The tract at residues 598–624 (LERETEGKPRVPLTIPDRLSRRPRFGR) is disordered.

It belongs to the class-II aminoacyl-tRNA synthetase family. As to quaternary structure, homodimer. Zn(2+) serves as cofactor.

The protein localises to the cytoplasm. It catalyses the reaction tRNA(Thr) + L-threonine + ATP = L-threonyl-tRNA(Thr) + AMP + diphosphate + H(+). In terms of biological role, catalyzes the attachment of threonine to tRNA(Thr) in a two-step reaction: L-threonine is first activated by ATP to form Thr-AMP and then transferred to the acceptor end of tRNA(Thr). Also edits incorrectly charged L-seryl-tRNA(Thr). The polypeptide is Threonine--tRNA ligase (Methanopyrus kandleri (strain AV19 / DSM 6324 / JCM 9639 / NBRC 100938)).